We begin with the raw amino-acid sequence, 59 residues long: Protein translocase subunit SecE (59 aa).

The helical transmembrane segment at 37–57 threads the bilayer; it reads LIVLLFVGLLAFLVQLAFSIL.

The protein belongs to the SecE/SEC61-gamma family. Component of the Sec protein translocase complex. Heterotrimer consisting of SecY (alpha), SecG (beta) and SecE (gamma) subunits. The heterotrimers can form oligomers, although 1 heterotrimer is thought to be able to translocate proteins. Interacts with the ribosome. May interact with SecDF, and other proteins may be involved.

Its subcellular location is the cell membrane. Essential subunit of the Sec protein translocation channel SecYEG. Clamps together the 2 halves of SecY. May contact the channel plug during translocation. The sequence is that of Protein translocase subunit SecE from Metallosphaera sedula (strain ATCC 51363 / DSM 5348 / JCM 9185 / NBRC 15509 / TH2).